The chain runs to 351 residues: Transmembrane protein 184 homolog DDB_G0279555 (351 aa).

The chain crosses the membrane as a helical span at residues 1-21; the sequence is MWIVAGVCSGVAILLSFYLIY. Asn26 is a glycosylation site (N-linked (GlcNAc...) asparagine). Helical transmembrane passes span 39–59, 73–93, 127–147, 162–182, and 206–226; these read ILIM…FVEL, YVLY…FDLV, FVLQ…VLET, YVWL…FLVL, and ILFF…FGVI. Asn236 carries an N-linked (GlcNAc...) asparagine glycan. Residues 241 to 261 traverse the membrane as a helical segment; the sequence is LQDFITCVEMVILAICHHFFF. Residues Asn301 and Asn304 are each glycosylated (N-linked (GlcNAc...) asparagine). A disordered region spans residues 327–351; the sequence is HNHPTTKKKDEESNLLEPEDKDIII. A compositionally biased stretch (acidic residues) spans 339 to 351; sequence SNLLEPEDKDIII.

Belongs to the TMEM184 family.

The protein resides in the cell membrane. Its function is as follows. Probable transporter. This is Transmembrane protein 184 homolog DDB_G0279555 (tmem184C) from Dictyostelium discoideum (Social amoeba).